A 576-amino-acid chain; its full sequence is Proline--tRNA ligase (576 aa).

The protein belongs to the class-II aminoacyl-tRNA synthetase family. ProS type 1 subfamily. As to quaternary structure, homodimer.

It localises to the cytoplasm. It catalyses the reaction tRNA(Pro) + L-proline + ATP = L-prolyl-tRNA(Pro) + AMP + diphosphate. Functionally, catalyzes the attachment of proline to tRNA(Pro) in a two-step reaction: proline is first activated by ATP to form Pro-AMP and then transferred to the acceptor end of tRNA(Pro). As ProRS can inadvertently accommodate and process non-cognate amino acids such as alanine and cysteine, to avoid such errors it has two additional distinct editing activities against alanine. One activity is designated as 'pretransfer' editing and involves the tRNA(Pro)-independent hydrolysis of activated Ala-AMP. The other activity is designated 'posttransfer' editing and involves deacylation of mischarged Ala-tRNA(Pro). The misacylated Cys-tRNA(Pro) is not edited by ProRS. The chain is Proline--tRNA ligase from Leptospira interrogans serogroup Icterohaemorrhagiae serovar copenhageni (strain Fiocruz L1-130).